The sequence spans 113 residues: Dolichyl-diphosphooligosaccharide--protein glycosyltransferase subunit DAD1 (113 aa).

Residues 1 to 30 are Cytoplasmic-facing; it reads MGSSAFEVLTFFLKDYKANTPQKLKIIDAY. Residues 31–51 form a helical membrane-spanning segment; that stretch reads LLYILLTGINQFLYCCLVGTF. A topological domain (lumenal) is located at residue P52. A helical transmembrane segment spans residues 53-73; the sequence is FNSFLSGFISCVASFVLGVCL. Over 74–92 the chain is Cytoplasmic; it reads RLQVNPQNSSNFCGIPPER. The chain crosses the membrane as a helical span at residues 93-113; sequence AFADFIFAHVVLHLVVMNFIG.

This sequence belongs to the DAD/OST2 family. In terms of assembly, component of the oligosaccharyltransferase (OST) complex. Widely expressed. Greatest expression seen in the epidermis, intermediate expression in the fat body and midgut and mild expression observed in the silk gland.

The protein resides in the endoplasmic reticulum membrane. Its pathway is protein modification; protein glycosylation. Functionally, subunit of the oligosaccharyl transferase (OST) complex that catalyzes the initial transfer of a defined glycan (Glc(3)Man(9)GlcNAc(2) in eukaryotes) from the lipid carrier dolichol-pyrophosphate to an asparagine residue within an Asn-X-Ser/Thr consensus motif in nascent polypeptide chains, the first step in protein N-glycosylation. N-glycosylation occurs cotranslationally and the complex associates with the Sec61 complex at the channel-forming translocon complex that mediates protein translocation across the endoplasmic reticulum (ER). All subunits are required for a maximal enzyme activity. The protein is Dolichyl-diphosphooligosaccharide--protein glycosyltransferase subunit DAD1 of Araneus ventricosus (Orbweaver spider).